The following is a 515-amino-acid chain: 2-(3-amino-3-carboxypropyl)histidine synthase subunit 2 (515 aa).

Residues C104, C125, and C353 each contribute to the [4Fe-4S] cluster site. A disordered region spans residues 493–515 (GMDEPSVLEQGRSGVARGYTEEK).

Belongs to the DPH1/DPH2 family. DPH2 subfamily. In terms of assembly, component of the 2-(3-amino-3-carboxypropyl)histidine synthase complex composed of DPH1, DPH2, DPH3 and a NADH-dependent reductase, predominantly CBR1. Requires [4Fe-4S] cluster as cofactor.

Its subcellular location is the cytoplasm. It functions in the pathway protein modification; peptidyl-diphthamide biosynthesis. Its function is as follows. Required for the first step of diphthamide biosynthesis, a post-translational modification of histidine which occurs in elongation factor 2. DPH1 and DPH2 transfer a 3-amino-3-carboxypropyl (ACP) group from S-adenosyl-L-methionine (SAM) to a histidine residue, the reaction is assisted by a reduction system comprising DPH3 and a NADH-dependent reductase, predominantly CBR1. Facilitates the reduction of the catalytic iron-sulfur cluster found in the DPH1 subunit. In Cryptococcus neoformans var. neoformans serotype D (strain B-3501A) (Filobasidiella neoformans), this protein is 2-(3-amino-3-carboxypropyl)histidine synthase subunit 2 (DPH2).